The following is a 159-amino-acid chain: Keratin-associated protein 6-2 (159 aa).

The 66 X 2 AA repeats of G-[YCGS] stretch occupies residues 11-147; sequence GYGCGYGSGY…SYYRSGCCGY (137 aa).

This sequence belongs to the KRTAP type 6 family. Interacts with hair keratins. Expressed in skin during two hair growth cycles. Expression restricted to the cortical cells of hair follicles, appearing first in the cortical cells processing the flat nuclei located a few cells above the dermal papilla.

Functionally, in the hair cortex, hair keratin intermediate filaments are embedded in an interfilamentous matrix, consisting of hair keratin-associated proteins (KRTAP), which are essential for the formation of a rigid and resistant hair shaft through their extensive disulfide bond cross-linking with abundant cysteine residues of hair keratins. The matrix proteins include the high-sulfur and high-glycine-tyrosine keratins. The polypeptide is Keratin-associated protein 6-2 (Mus musculus (Mouse)).